Consider the following 269-residue polypeptide: Shikimate dehydrogenase (NADP(+)) (269 aa).

Residues 22–24 (TLS) and Thr-68 each bind shikimate. Lys-72 serves as the catalytic Proton acceptor. The shikimate site is built by Asn-93 and Asp-104. NADP(+)-binding positions include 128-132 (GAGGA), 152-157 (NRTNLR), and Phe-210. Tyr-212 is a binding site for shikimate. Residue Gly-233 coordinates NADP(+).

It belongs to the shikimate dehydrogenase family. Homodimer.

It carries out the reaction shikimate + NADP(+) = 3-dehydroshikimate + NADPH + H(+). The protein operates within metabolic intermediate biosynthesis; chorismate biosynthesis; chorismate from D-erythrose 4-phosphate and phosphoenolpyruvate: step 4/7. Involved in the biosynthesis of the chorismate, which leads to the biosynthesis of aromatic amino acids. Catalyzes the reversible NADPH linked reduction of 3-dehydroshikimate (DHSA) to yield shikimate (SA). The polypeptide is Shikimate dehydrogenase (NADP(+)) (Saccharolobus islandicus (strain Y.N.15.51 / Yellowstone #2) (Sulfolobus islandicus)).